The chain runs to 119 residues: Large ribosomal subunit protein bL20c (119 aa).

It belongs to the bacterial ribosomal protein bL20 family.

Its subcellular location is the plastid. The protein localises to the chloroplast. Binds directly to 23S ribosomal RNA and is necessary for the in vitro assembly process of the 50S ribosomal subunit. It is not involved in the protein synthesizing functions of that subunit. This is Large ribosomal subunit protein bL20c from Oedogonium cardiacum (Filamentous green alga).